The chain runs to 467 residues: MARLFGTDGVRGVANADLTAELALALASAAVEEVADRGTPPPGPVDGVPVARSAHGIDHRPLVVVGRDTRPSGEFLEAAVVAGLARAGADVTRIGVVPTPAVSYVVAATGADLGVMLSASHNPMPDNGIKLFAAGGLKLPDDVEDAIERRMAGPAARRPVAAAVGRVRDDSMLVDGYVDHLLATLPGGPGGLRGLRVVVDCAQGAASDLAPRVLRAAGADVIALHADGDGLRINDRSGATHLDSLRDAVVAHGADAGIAHDGDADRCLAVDSAGEIVDGDQILALCALALAERGELERGTVVVTVMSNLGFHHAMRDAGIDVVTTPVGDRYVLEAMRSGAYSLGGEQSGHVVFLRHAGTGDGLLTALQILGRMAETSQPLHELAKAMTRLPQVLVNVRGVDRARAETSDELRAAVADAEAELAGAGRVLLRPSGTEPLVRVMVEAPTDELARDVAGRLADVVQRALR.

S120 acts as the Phosphoserine intermediate in catalysis. S120, D261, D263, and D265 together coordinate Mg(2+). S120 carries the post-translational modification Phosphoserine.

This sequence belongs to the phosphohexose mutase family. Mg(2+) is required as a cofactor. Post-translationally, activated by phosphorylation.

It catalyses the reaction alpha-D-glucosamine 1-phosphate = D-glucosamine 6-phosphate. Catalyzes the conversion of glucosamine-6-phosphate to glucosamine-1-phosphate. The chain is Phosphoglucosamine mutase from Parafrankia sp. (strain EAN1pec).